Consider the following 546-residue polypeptide: Arginine--tRNA ligase (546 aa).

The short motif at 122 to 132 is the 'HIGH' region element; the sequence is ANPTGPFTVGH.

It belongs to the class-I aminoacyl-tRNA synthetase family. As to quaternary structure, monomer.

It localises to the cytoplasm. It catalyses the reaction tRNA(Arg) + L-arginine + ATP = L-arginyl-tRNA(Arg) + AMP + diphosphate. The sequence is that of Arginine--tRNA ligase from Thermotoga petrophila (strain ATCC BAA-488 / DSM 13995 / JCM 10881 / RKU-1).